The following is a 194-amino-acid chain: Fe/S biogenesis protein NfuA (194 aa).

Residues cysteine 152 and cysteine 155 each coordinate [4Fe-4S] cluster.

This sequence belongs to the NfuA family. In terms of assembly, homodimer. [4Fe-4S] cluster is required as a cofactor.

Involved in iron-sulfur cluster biogenesis. Binds a 4Fe-4S cluster, can transfer this cluster to apoproteins, and thereby intervenes in the maturation of Fe/S proteins. Could also act as a scaffold/chaperone for damaged Fe/S proteins. The sequence is that of Fe/S biogenesis protein NfuA from Teredinibacter turnerae (strain ATCC 39867 / T7901).